Reading from the N-terminus, the 158-residue chain is Sec-independent protein translocase protein TatB (158 aa).

Residues 2–22 (FDGIGFMELLLIGVLGLVVLG) form a helical membrane-spanning segment. A disordered region spans residues 86 to 158 (LKQAAQSVNR…DTSSNPKANG (73 aa)). Polar residues-rich tracts occupy residues 88–107 (QAAQSVNRPYQVQDSSSQGT), 113–136 (QIHSPAQVSQTNPTTPLETSQHLT), and 143–158 (EPSQGVDTSSNPKANG).

This sequence belongs to the TatB family. The Tat system comprises two distinct complexes: a TatABC complex, containing multiple copies of TatA, TatB and TatC subunits, and a separate TatA complex, containing only TatA subunits. Substrates initially bind to the TatABC complex, which probably triggers association of the separate TatA complex to form the active translocon.

The protein resides in the cell inner membrane. Part of the twin-arginine translocation (Tat) system that transports large folded proteins containing a characteristic twin-arginine motif in their signal peptide across membranes. Together with TatC, TatB is part of a receptor directly interacting with Tat signal peptides. TatB may form an oligomeric binding site that transiently accommodates folded Tat precursor proteins before their translocation. The sequence is that of Sec-independent protein translocase protein TatB from Shewanella putrefaciens (strain CN-32 / ATCC BAA-453).